A 114-amino-acid polypeptide reads, in one-letter code: UPF0342 protein LCABL_19440 (114 aa).

This sequence belongs to the UPF0342 family.

This is UPF0342 protein LCABL_19440 from Lacticaseibacillus casei (strain BL23) (Lactobacillus casei).